The primary structure comprises 31 residues: Cytochrome b6-f complex subunit 6 (31 aa).

The helical transmembrane segment at 3–23 threads the bilayer; the sequence is VAIDYFLLVGFCFAVTSGLWI.

The protein belongs to the PetL family. In terms of assembly, the 4 large subunits of the cytochrome b6-f complex are cytochrome b6, subunit IV (17 kDa polypeptide, PetD), cytochrome f and the Rieske protein, while the 4 small subunits are PetG, PetL, PetM and PetN. The complex functions as a dimer.

It is found in the plastid. It localises to the chloroplast thylakoid membrane. Component of the cytochrome b6-f complex, which mediates electron transfer between photosystem II (PSII) and photosystem I (PSI), cyclic electron flow around PSI, and state transitions. PetL is important for photoautotrophic growth as well as for electron transfer efficiency and stability of the cytochrome b6-f complex. In Phaeodactylum tricornutum (strain CCAP 1055/1), this protein is Cytochrome b6-f complex subunit 6.